A 700-amino-acid chain; its full sequence is Mitosis inducer protein blt1 (700 aa).

2 stretches are compositionally biased toward polar residues: residues 1-11 and 43-53; these read MSKSAFTSKSQ and PRSTALPNLSN. 2 disordered regions span residues 1–53 and 266–293; these read MSKS…NLSN and TNNR…SKDQ. Over residues 273–284 the composition is skewed to low complexity; that stretch reads GSDGSNSNFNGG. Positions 496-575 form a coiled coil; that stretch reads SVALDDHNRQ…LNMLQKLSMQ (80 aa). Disordered stretches follow at residues 634 to 659 and 671 to 700; these read FSSF…RKPS and SSGS…SSKM. Ser636 is modified (phosphoserine).

As to quaternary structure, interacts with cdr2, mid1 and sad1.

The protein localises to the cytoplasm. Its subcellular location is the cytoskeleton. Its function is as follows. At the onset of mitosis, forms a medial ring structure before the arrangement of the medial actin ring. Essential for the central positioning of the division septum before the cell divides. This is Mitosis inducer protein blt1 (blt1) from Schizosaccharomyces pombe (strain 972 / ATCC 24843) (Fission yeast).